The primary structure comprises 161 residues: Anaerobic nitrite reductase HB2 (161 aa).

In terms of domain architecture, Globin spans 5–154 (VFTEKQEALV…LALAIKAEMK (150 aa)). The Homodimerization signature appears at 38–42 (EIAPA). 4 residues coordinate heme b: Ser-48, Lys-62, His-66, and His-101. The short motif at 108–120 (DPHFEVVKEALVR) is the Homodimerization element.

Belongs to the plant globin family. Homodimer. The cofactor is heme b.

The protein resides in the cytoplasm. It localises to the nucleus. It catalyses the reaction Fe(III)-heme b-[protein] + nitric oxide + H2O = Fe(II)-heme b-[protein] + nitrite + 2 H(+). Its function is as follows. Phytoglobin that reduces nitrite to nitric oxide (NO) under anoxic conditions (e.g. during flooding or in waterlogged soil). May not function as an oxygen storage or transport protein. Has an unusually high affinity for O(2) through an hexacoordinate heme iron because of a very low dissociation constant. This chain is Anaerobic nitrite reductase HB2, found in Brassica napus (Rape).